Here is a 78-residue protein sequence, read N- to C-terminus: Signal peptidase complex subunit 1 (78 aa).

The Cytoplasmic portion of the chain corresponds to 1–18; it reads MNYLEGTIDFAGQLRCQK. Residues 19–38 traverse the membrane as a helical segment; the sequence is YMNYGLCTSAVISYIYGYLV. The Lumenal portion of the chain corresponds to 39–42; that stretch reads QDSY. The chain crosses the membrane as a helical span at residues 43 to 63; that stretch reads CVIKLFLILASLVALVCLPAW. The Cytoplasmic segment spans residues 64–78; the sequence is SMYNKNPLKFQKKKE.

It belongs to the SPCS1 family. As to quaternary structure, component of the signal peptidase complex (SPC) composed of a catalytic subunit sec11 and three accessory subunits spc1, spc2 and spc3. The complex induces a local thinning of the ER membrane which is used to measure the length of the signal peptide (SP) h-region of protein substrates. This ensures the selectivity of the complex towards h-regions shorter than 18-20 amino acids. SPC associates with the translocon complex.

The protein localises to the endoplasmic reticulum membrane. In terms of biological role, component of the signal peptidase complex (SPC) which catalyzes the cleavage of N-terminal signal sequences from nascent proteins as they are translocated into the lumen of the endoplasmic reticulum. Dispensable for SPC enzymatic activity. This is Signal peptidase complex subunit 1 from Schizosaccharomyces pombe (strain 972 / ATCC 24843) (Fission yeast).